We begin with the raw amino-acid sequence, 312 residues long: Glyoxylate/hydroxypyruvate reductase A (312 aa).

Arginine 227 is a catalytic residue. Histidine 275 acts as the Proton donor in catalysis.

This sequence belongs to the D-isomer specific 2-hydroxyacid dehydrogenase family. GhrA subfamily.

The protein localises to the cytoplasm. It carries out the reaction glycolate + NADP(+) = glyoxylate + NADPH + H(+). The enzyme catalyses (R)-glycerate + NAD(+) = 3-hydroxypyruvate + NADH + H(+). The catalysed reaction is (R)-glycerate + NADP(+) = 3-hydroxypyruvate + NADPH + H(+). In terms of biological role, catalyzes the NADPH-dependent reduction of glyoxylate and hydroxypyruvate into glycolate and glycerate, respectively. This chain is Glyoxylate/hydroxypyruvate reductase A, found in Salmonella paratyphi C (strain RKS4594).